We begin with the raw amino-acid sequence, 125 residues long: Glycine cleavage system H protein (125 aa).

The Lipoyl-binding domain occupies 23–104 (VVYIGITDYA…PYENWILKVK (82 aa)). N6-lipoyllysine is present on K64.

The protein belongs to the GcvH family. The glycine cleavage system is composed of four proteins: P, T, L and H. It depends on (R)-lipoate as a cofactor.

The glycine cleavage system catalyzes the degradation of glycine. The H protein shuttles the methylamine group of glycine from the P protein to the T protein. This chain is Glycine cleavage system H protein, found in Clostridioides difficile (strain 630) (Peptoclostridium difficile).